Here is a 226-residue protein sequence, read N- to C-terminus: Ribonuclease 3 (226 aa).

The RNase III domain occupies 7 to 129 (LPRLCRTLGY…IIGAVYLDAD (123 aa)). A Mg(2+)-binding site is contributed by glutamate 42. Aspartate 46 is a catalytic residue. Residues aspartate 115 and glutamate 118 each coordinate Mg(2+). The active site involves glutamate 118. The 71-residue stretch at 156–226 (DPKTILQEYL…AAQVLELLNK (71 aa)) folds into the DRBM domain.

Belongs to the ribonuclease III family. As to quaternary structure, homodimer. The cofactor is Mg(2+).

It localises to the cytoplasm. The enzyme catalyses Endonucleolytic cleavage to 5'-phosphomonoester.. Digests double-stranded RNA. Involved in the processing of primary rRNA transcript to yield the immediate precursors to the large and small rRNAs (23S and 16S). Processes some mRNAs, and tRNAs when they are encoded in the rRNA operon. Processes pre-crRNA and tracrRNA of type II CRISPR loci if present in the organism. The polypeptide is Ribonuclease 3 (Shewanella frigidimarina (strain NCIMB 400)).